Consider the following 415-residue polypeptide: Lipoyl synthase, mitochondrial (415 aa).

The transit peptide at 1-32 directs the protein to the mitochondrion; that stretch reads MAASTNRLRFLYSSARTVPQTGSITPISRRTY. Polar residues predominate over residues 22-32; that stretch reads GSITPISRRTY. Positions 22–53 are disordered; that stretch reads GSITPISRRTYATTEPSPSATGAPATARKRTN. The span at 33 to 47 shows a compositional bias: low complexity; sequence ATTEPSPSATGAPAT. [4Fe-4S] cluster-binding residues include C132, C137, C143, C163, C167, C170, and S378. In terms of domain architecture, Radical SAM core spans 146-367; sequence GSDKSAATAT…RQRALDMGFL (222 aa). A disordered region spans residues 395-415; it reads AAGTAGESVTDSKAAVDEATR.

Belongs to the radical SAM superfamily. Lipoyl synthase family. It depends on [4Fe-4S] cluster as a cofactor.

Its subcellular location is the mitochondrion. The enzyme catalyses [[Fe-S] cluster scaffold protein carrying a second [4Fe-4S](2+) cluster] + N(6)-octanoyl-L-lysyl-[protein] + 2 oxidized [2Fe-2S]-[ferredoxin] + 2 S-adenosyl-L-methionine + 4 H(+) = [[Fe-S] cluster scaffold protein] + N(6)-[(R)-dihydrolipoyl]-L-lysyl-[protein] + 4 Fe(3+) + 2 hydrogen sulfide + 2 5'-deoxyadenosine + 2 L-methionine + 2 reduced [2Fe-2S]-[ferredoxin]. It participates in protein modification; protein lipoylation via endogenous pathway; protein N(6)-(lipoyl)lysine from octanoyl-[acyl-carrier-protein]: step 2/2. Catalyzes the radical-mediated insertion of two sulfur atoms into the C-6 and C-8 positions of the octanoyl moiety bound to the lipoyl domains of lipoate-dependent enzymes, thereby converting the octanoylated domains into lipoylated derivatives. This Aspergillus oryzae (strain ATCC 42149 / RIB 40) (Yellow koji mold) protein is Lipoyl synthase, mitochondrial.